The following is a 54-amino-acid chain: Large ribosomal subunit protein bL32c (54 aa).

A disordered region spans residues 1–20; sequence MAVPKKKMSKSRRNSRKSNW.

It belongs to the bacterial ribosomal protein bL32 family.

It is found in the plastid. The protein resides in the chloroplast. This is Large ribosomal subunit protein bL32c (rpl32) from Euglena gracilis.